The primary structure comprises 341 residues: tRNA (cytidine(56)-2'-O)-methyltransferase (341 aa).

S-adenosyl-L-methionine-binding positions include Leu79 and 104 to 108 (GAEKV). One can recognise an HD domain in the interval 187–294 (IIRHVETVYK…VAHADNLVSM (108 aa)).

Belongs to the aTrm56 family. In terms of assembly, homodimer.

The protein resides in the cytoplasm. It carries out the reaction cytidine(56) in tRNA + S-adenosyl-L-methionine = 2'-O-methylcytidine(56) in tRNA + S-adenosyl-L-homocysteine + H(+). In terms of biological role, specifically catalyzes the AdoMet-dependent 2'-O-ribose methylation of cytidine at position 56 in tRNAs. This is tRNA (cytidine(56)-2'-O)-methyltransferase from Picrophilus torridus (strain ATCC 700027 / DSM 9790 / JCM 10055 / NBRC 100828 / KAW 2/3).